Reading from the N-terminus, the 128-residue chain is Protein 2B* (128 aa).

2 disordered regions span residues 1–27 and 92–128; these read PFMF…NPTA and RDDN…RNSS. The segment covering 18 to 27 has biased composition (polar residues); it reads SVINGSNPTA. A compositionally biased stretch (basic and acidic residues) spans 111–128; it reads IDGRRDYKPDKSVRRNSS.

This sequence belongs to the encephalomyocarditis virus protein 2B* family.

This is Protein 2B* from Aotus trivirgatus (Three-striped night monkey).